We begin with the raw amino-acid sequence, 473 residues long: Glutamate--tRNA ligase 1 (473 aa).

The short motif at 11–21 (PSPTGFLHIGG) is the 'HIGH' region element. The tract at residues 111–132 (REQARKEGRPPRYDGRWRDRAE) is disordered. The 'KMSKS' region signature appears at 240 to 244 (KLSKR). ATP is bound at residue lysine 243.

It belongs to the class-I aminoacyl-tRNA synthetase family. Glutamate--tRNA ligase type 1 subfamily. Monomer.

It localises to the cytoplasm. It carries out the reaction tRNA(Glu) + L-glutamate + ATP = L-glutamyl-tRNA(Glu) + AMP + diphosphate. In terms of biological role, catalyzes the attachment of glutamate to tRNA(Glu) in a two-step reaction: glutamate is first activated by ATP to form Glu-AMP and then transferred to the acceptor end of tRNA(Glu). This Beijerinckia indica subsp. indica (strain ATCC 9039 / DSM 1715 / NCIMB 8712) protein is Glutamate--tRNA ligase 1.